Consider the following 306-residue polypeptide: UDP-3-O-acyl-N-acetylglucosamine deacetylase (306 aa).

Residues His79, His239, and Asp243 each contribute to the Zn(2+) site. His266 functions as the Proton donor in the catalytic mechanism.

This sequence belongs to the LpxC family. Zn(2+) is required as a cofactor.

The catalysed reaction is a UDP-3-O-[(3R)-3-hydroxyacyl]-N-acetyl-alpha-D-glucosamine + H2O = a UDP-3-O-[(3R)-3-hydroxyacyl]-alpha-D-glucosamine + acetate. It participates in glycolipid biosynthesis; lipid IV(A) biosynthesis; lipid IV(A) from (3R)-3-hydroxytetradecanoyl-[acyl-carrier-protein] and UDP-N-acetyl-alpha-D-glucosamine: step 2/6. Functionally, catalyzes the hydrolysis of UDP-3-O-myristoyl-N-acetylglucosamine to form UDP-3-O-myristoylglucosamine and acetate, the committed step in lipid A biosynthesis. This is UDP-3-O-acyl-N-acetylglucosamine deacetylase from Actinobacillus pleuropneumoniae serotype 7 (strain AP76).